A 207-amino-acid polypeptide reads, in one-letter code: uncharacterized protein (207 aa).

The protein resides in the mitochondrion. This is an uncharacterized protein from Marchantia polymorpha (Common liverwort).